We begin with the raw amino-acid sequence, 409 residues long: MRVPININNALARVRDPLSIGGLKFPTTKEIQEAVAAIADKFNQENDLVDRFFPEDSTFASELELYLLRTQDAEQTGMTFVHQVGSTSLPVEARVAKVDLAKATWSPLAFKESRVWDEKEILYLGRLADEVQAGVINEQIAESLTWLMARMRNRRRWLTWQVMRTGRITIQPNDPYNPNGLKYVIDYGVTDIELPLPQKFDAKDGNGNSAVDPIQYFRDLIKAATYFPDRRPVAIIVGPGFDEVLADNTFVQKYVEYEKGWVVGQNTVQPPREVYRQAALDIFKRYTGLEVMVYDKTYRDQDGSVKYWIPVGELIVLNQSTGPVGRFVYTAHVAGQRNGKVVYATGPYLTVKDHLQDDPPYYAIIAGFHGLPQLSGYNTEDFSFHRFKWLKYANNVQSYLPPFPPKVEL.

The protein belongs to the lambda phage major capsid protein family. Homomultimer. Interacts with the portal protein. Interacts with the decoration protein.

Its subcellular location is the virion. The protein resides in the host cytoplasm. Assembles to form an icosahedric capsid shell with a T=7 symmetry although with a diameter of about 82 nm, which is a larger volume than the usual T=7 capsids. A dramatic reconfiguration of the capsid shell that expands the procaspid from a diameter of 66 nm to a supersized capsid of 82 nm, allows packaging of the large viral DNA genome. The capsid decoration protein binds the expanded capsid and stabilizes it. This is Major capsid protein from Thermus virus P23-45 (Thermus thermophilus phage P23-45).